Consider the following 166-residue polypeptide: Glycine cleavage system H protein 3, mitochondrial (166 aa).

The N-terminal 35 residues, 1–35, are a transit peptide targeting the mitochondrion; that stretch reads MALRMWASSTANALKLSSSASKSHLLPAFSISRCF. Residues 57–139 form the Lipoyl-binding domain; the sequence is VATIGITDHA…YEDGWMIKVK (83 aa). Lys98 bears the N6-lipoyllysine mark. Ser141 is modified (phosphoserine).

The protein belongs to the GcvH family. The glycine cleavage system is composed of four proteins: P, T, L and H. It depends on (R)-lipoate as a cofactor. Post-translationally, S-nitrosylated and/or glutathionylated at unknown positions in response to nitric oxide.

Its subcellular location is the mitochondrion. With respect to regulation, inhibited by harpin, S-nitrosoglutathione (GSNO), nitric oxide, N-ethylmaleimide and 5,5'-dithiobis-(2-nitrobenzoic acid). In terms of biological role, the glycine decarboxylase (GDC) or glycine cleavage system catalyzes the degradation of glycine. The H protein shuttles the methylamine group of glycine from the P protein to the T protein. The polypeptide is Glycine cleavage system H protein 3, mitochondrial (GDH3) (Arabidopsis thaliana (Mouse-ear cress)).